Reading from the N-terminus, the 487-residue chain is UPF0276 protein SAV_2218 (487 aa).

A UPF0276 region spans residues 1–285; the sequence is MVEEGTMERL…LGAIRKTLEK (285 aa). The segment at 286–487 is unknown; sequence AGTRAGASAG…RATRRVLLRR (202 aa). The segment at 319-348 is disordered; that stretch reads AGPRRGGADAQAAPRAAGTEALSAASTSTP. Positions 326–348 are enriched in low complexity; it reads ADAQAAPRAAGTEALSAASTSTP.

This sequence in the N-terminal section; belongs to the UPF0276 family.

In Streptomyces avermitilis (strain ATCC 31267 / DSM 46492 / JCM 5070 / NBRC 14893 / NCIMB 12804 / NRRL 8165 / MA-4680), this protein is UPF0276 protein SAV_2218.